Reading from the N-terminus, the 74-residue chain is UPF0248 protein MK0350 (74 aa).

The protein belongs to the UPF0248 family.

The polypeptide is UPF0248 protein MK0350 (Methanopyrus kandleri (strain AV19 / DSM 6324 / JCM 9639 / NBRC 100938)).